Consider the following 189-residue polypeptide: HGPRTase-like protein 1 (189 aa).

Belongs to the purine/pyrimidine phosphoribosyltransferase family. Archaeal HPRT subfamily.

Functionally, may catalyze a purine salvage reaction, the substrate is unknown. This chain is HGPRTase-like protein 1, found in Natrialba magadii (strain ATCC 43099 / DSM 3394 / CCM 3739 / CIP 104546 / IAM 13178 / JCM 8861 / NBRC 102185 / NCIMB 2190 / MS3) (Natronobacterium magadii).